Here is a 427-residue protein sequence, read N- to C-terminus: MSDSKEPRLQQLGLLEEEQLRGLGFRQTRGYKSLAGCLGHGPLVLQLLSFTLLAALLVQVSKVPSSISQEQSRQDAIYQNLTQFKAAVGELSEKSKLQEIYQELTQLKAAVGELPEKSKQQEIYQELSQLKAAVGELPEKSKQQEIYQELSQLKAAVGELPEKSKQQEIYQELTRLKAAVGELPEKSKQQEIYQELSQLKAAVGELPEKSKQQEIYQELSQLKAAVGELPEKSKQQEIYQELTQLKAAVGELPEKSKQQEIYQELTQLKAAVERLCRRCPWEWTFFQGNCYFMSNSQRNWHDSITACQEVGAQLVVIKSAEEQNFLQLQSSRSNRFTWMGLSDLNHEGTWQWVDGSPLLPSFKQYWNRGEPNNVGEEDCAEFSGNGWNDDKCNLAKFWICKKSAASCSRDEEQFLSPASATPNPPPE.

The Cytoplasmic segment spans residues 1–37 (MSDSKEPRLQQLGLLEEEQLRGLGFRQTRGYKSLAGC). 3 consecutive short sequence motifs (endocytosis signal) follow at residues 14 to 15 (LL), 16 to 18 (EEE), and 31 to 34 (YKSL). Residues 38–58 (LGHGPLVLQLLSFTLLAALLV) form a helical; Signal-anchor for type II membrane protein membrane-spanning segment. Topologically, residues 59 to 427 (QVSKVPSSIS…ASATPNPPPE (369 aa)) are extracellular. N-linked (GlcNAc...) asparagine glycosylation occurs at Asn-80. Tandem repeats lie at residues 96-118 (KLQEIYQELTQLKAAVGELPEKS), 119-141 (KQQEIYQELSQLKAAVGELPEKS), 142-164 (KQQEIYQELSQLKAAVGELPEKS), 165-187 (KQQEIYQELTRLKAAVGELPEKS), 188-210 (KQQEIYQELSQLKAAVGELPEKS), 211-233 (KQQEIYQELSQLKAAVGELPEKS), 234-256 (KQQEIYQELTQLKAAVGELPEKS), and 257-280 (KQQEIYQELTQLKAAVERLCRRCP). Residues 96–280 (KLQEIYQELT…AVERLCRRCP (185 aa)) are 8 X approximate tandem repeats. 3 disulfide bridges follow: Cys-279–Cys-290, Cys-307–Cys-400, and Cys-379–Cys-392. The 116-residue stretch at 286 to 401 (FQGNCYFMSN…CNLAKFWICK (116 aa)) folds into the C-type lectin domain. Ca(2+)-binding residues include Glu-370, Asn-372, Val-374, Glu-377, Asn-388, and Asp-389.

Homotetramer. Interacts with C1QBP; the interaction is indicative for a C1q:C1QBP:CD209 signaling complex. Interacts with ICAM2 and ICAM3 by binding to mannose-like carbohydrates. Interacts (via C-type lectin domain) with CEACAM1 (via Lewis X moieties); this interaction is regulated by the glycosylation pattern of CEACAM1 on cell types and regulates contact between dendritic cells and neutrophils.

The protein resides in the membrane. Functionally, pathogen-recognition receptor expressed on the surface of immature dendritic cells (DCs) and involved in initiation of primary immune response. Thought to mediate the endocytosis of pathogens which are subsequently degraded in lysosomal compartments. The receptor returns to the cell membrane surface and the pathogen-derived antigens are presented to resting T-cells via MHC class II proteins to initiate the adaptive immune response. Probably recognizes in a calcium-dependent manner high mannose N-linked oligosaccharides in a variety of pathogen antigens. On DCs it is a high affinity receptor for ICAM2 and ICAM3 by binding to mannose-like carbohydrates. May act as a DC rolling receptor that mediates transendothelial migration of DC presursors from blood to tissues by binding endothelial ICAM2. Seems to regulate DC-induced T-cell proliferation by binding to ICAM3 on T-cells in the immunological synapse formed between DC and T-cells. This Gorilla gorilla gorilla (Western lowland gorilla) protein is CD209 antigen (CD209).